Here is a 213-residue protein sequence, read N- to C-terminus: MHQQKRQPELVEGNLPVFVFPTELIFYADDQSTHKQVLTLYNPYEFALKFKVLCTTPNKYVVVDAAGAVKPQCCMDIVIRHRDVRSCHYGVIDKFRLQVSEQSQRKALGRKEVVATLLPSAKEQQKEEEEKRIKEHLTESLFFEQSFQPENRTVSSGPSLLTVFLAVVCITALMLPTLGDVESLVPLYLHLSVNQKLVAAYILGLITMAIFRT.

The MSP domain maps to 16-143 (PVFVFPTELI…KEHLTESLFF (128 aa)). The next 2 membrane-spanning stretches (helical) occupy residues 159 to 179 (SLLTVFLAVVCITALMLPTLG) and 191 to 211 (LSVNQKLVAAYILGLITMAIF). The short motif at 205-208 (LITM) is the Nuclear export signal element.

The protein resides in the endoplasmic reticulum membrane. It is found in the golgi apparatus membrane. In terms of biological role, plays a role in differentiation and/or proliferation of mesenchymal stem cells. Proposed to be involved in epithelial-to-mesenchymal transition (EMT). However, another study suggests that it is not required for EMT or stem cell self-renewal and acts during later stages of differentiation. The protein is Motile sperm domain-containing protein 1 (MOSPD1) of Bos taurus (Bovine).